Reading from the N-terminus, the 155-residue chain is Putative pre-16S rRNA nuclease (155 aa).

This sequence belongs to the YqgF nuclease family.

Its subcellular location is the cytoplasm. Could be a nuclease involved in processing of the 5'-end of pre-16S rRNA. The protein is Putative pre-16S rRNA nuclease of Xylella fastidiosa (strain M12).